Consider the following 1044-residue polypeptide: AT-rich interactive domain-containing protein 5B (1044 aa).

Disordered regions lie at residues 143–211 (PRKK…GDEC), 301–350 (RFTK…GDKD), 363–392 (MEELQEKQNSQQLQAPTQTDRDPNSPLTED), 554–591 (NNYPYGPPPPLVSRRLSSSGTEVSSAGQSSSQVSSSVE), 603–672 (QHAQ…SFLS), 733–767 (SQKEKGPPPERVTEEQPTDLSLPKSSPLKLPLSTS), 811–835 (VSASKKVTESHSKVLEKTPNSRGEE), and 884–912 (TPLHCSTQRDLPGKPRTPEADSESVKPAE). Basic and acidic residues-rich tracts occupy residues 197-211 (VQSENKPKGDGGDEC), 301-310 (RFTKGEEDKP), and 337-350 (RPKDEQKTPRGDKD). In terms of domain architecture, ARID spans 212-304 (RTDEQAFLVA…LILPYERFTK (93 aa)). The span at 369–380 (KQNSQQLQAPTQ) shows a compositional bias: polar residues. Low complexity predominate over residues 565-591 (VSRRLSSSGTEVSSAGQSSSQVSSSVE). Basic and acidic residues-rich tracts occupy residues 611–635 (RGSEDRRSSTEGSQKDGCSEGEPVH), 644–660 (PYLKRVDPHSSMEKSAE), and 733–746 (SQKEKGPPPERVTE). A compositionally biased stretch (low complexity) spans 752-767 (LSLPKSSPLKLPLSTS). Basic and acidic residues-rich tracts occupy residues 816 to 826 (KVTESHSKVLE) and 894 to 909 (LPGKPRTPEADSESVK).

Belongs to the ARID5B family.

It localises to the nucleus. Functionally, transcription coactivator that binds to the 5'-AATA[CT]-3' core sequence and plays a key role in adipogenesis and liver development. Required for adipogenesis: regulates triglyceride metabolism in adipocytes by regulating expression of adipogenic genes. The protein is AT-rich interactive domain-containing protein 5B (arid5b) of Danio rerio (Zebrafish).